The chain runs to 291 residues: Ribosomal RNA small subunit methyltransferase H (291 aa).

S-adenosyl-L-methionine contacts are provided by residues 36-38, Asp-55, Leu-88, Asp-102, and Gln-109; that span reads GGH. Residues 268 to 291 are disordered; it reads KPTQEETKNNPRARSAKLRVAERI.

Belongs to the methyltransferase superfamily. RsmH family.

It localises to the cytoplasm. It carries out the reaction cytidine(1402) in 16S rRNA + S-adenosyl-L-methionine = N(4)-methylcytidine(1402) in 16S rRNA + S-adenosyl-L-homocysteine + H(+). In terms of biological role, specifically methylates the N4 position of cytidine in position 1402 (C1402) of 16S rRNA. The protein is Ribosomal RNA small subunit methyltransferase H of Thermosipho melanesiensis (strain DSM 12029 / CIP 104789 / BI429).